We begin with the raw amino-acid sequence, 1096 residues long: Protein spire (1096 aa).

Disordered stretches follow at residues Met-1 to Thr-79 and Val-184 to Val-211. Residues Leu-37–Ala-51 are compositionally biased toward polar residues. Residues Thr-53–Gly-65 show a composition bias toward basic residues. 2 stretches are compositionally biased toward low complexity: residues Ala-66 to Asn-77 and Gln-189 to Pro-201. One can recognise a KIND domain in the interval Val-111–Leu-366. The stretch at Lys-315–Asn-340 forms a coiled coil. WH2 domains are found at residues Pro-436–Val-454 and Pro-500–Ile-517. Disordered regions lie at residues Asp-560–Ala-588, Gln-614–Thr-656, and Gln-693–Trp-762. Residues His-574–Ala-585 show a composition bias toward basic residues. 2 stretches are compositionally biased toward low complexity: residues Ala-633–Ala-645 and Asp-714–Ser-725. Residues Glu-737 to His-754 are compositionally biased toward basic and acidic residues. Positions Leu-780–Glu-800 are spir-box. Low complexity predominate over residues Pro-874–Thr-894. 3 disordered regions span residues Pro-874–Asp-899, Arg-912–His-958, and Arg-997–Leu-1021. Residues Ser-921–Gly-941 show a composition bias toward polar residues.

This sequence belongs to the spire family. As to quaternary structure, interacts with bsk, Rho1, Rac1, Cdc42 and wash. Interacts with capu. Post-translationally, phosphorylated by Jnk kinase (bsk).

It localises to the cytoplasm. It is found in the cytoskeleton. Its subcellular location is the perinuclear region. The protein resides in the cell membrane. The protein localises to the cytoplasmic vesicle membrane. Its function is as follows. Acts as an actin nucleation factor, remains associated with the slow-growing pointed end of the new filament. Promotes dissociation of capu from the barbed end of actin filaments. Involved in intracellular vesicle transport along actin fibers, providing a novel link between actin cytoskeleton dynamics and intracellular transport. Required for localization of determinants within the developing oocyte to the posterior pole and to the dorsal anterior corner. Links Rho family signaling and Jnk function to the actin cytoskeleton. The chain is Protein spire from Drosophila pseudoobscura pseudoobscura (Fruit fly).